The primary structure comprises 264 residues: Thymidylate synthase (264 aa).

Arg-21 lines the dUMP pocket. Residue His-51 participates in (6R)-5,10-methylene-5,6,7,8-tetrahydrofolate binding. 126-127 (RR) contributes to the dUMP binding site. Cys-146 functions as the Nucleophile in the catalytic mechanism. Residues 166–169 (RSCD), Asn-177, and 207–209 (HLY) each bind dUMP. Asp-169 contacts (6R)-5,10-methylene-5,6,7,8-tetrahydrofolate. Residue Ser-263 coordinates (6R)-5,10-methylene-5,6,7,8-tetrahydrofolate.

The protein belongs to the thymidylate synthase family. Bacterial-type ThyA subfamily. As to quaternary structure, homodimer.

It localises to the cytoplasm. It catalyses the reaction dUMP + (6R)-5,10-methylene-5,6,7,8-tetrahydrofolate = 7,8-dihydrofolate + dTMP. It functions in the pathway pyrimidine metabolism; dTTP biosynthesis. Its function is as follows. Catalyzes the reductive methylation of 2'-deoxyuridine-5'-monophosphate (dUMP) to 2'-deoxythymidine-5'-monophosphate (dTMP) while utilizing 5,10-methylenetetrahydrofolate (mTHF) as the methyl donor and reductant in the reaction, yielding dihydrofolate (DHF) as a by-product. This enzymatic reaction provides an intracellular de novo source of dTMP, an essential precursor for DNA biosynthesis. The protein is Thymidylate synthase of Buchnera aphidicola subsp. Acyrthosiphon pisum (strain APS) (Acyrthosiphon pisum symbiotic bacterium).